Consider the following 163-residue polypeptide: Fatty acid-binding protein homolog (163 aa).

Positions 1-23 (MRCLVALILTVLIVTPEVEAKTL) are cleaved as a signal peptide.

The protein belongs to the calycin superfamily. Fatty-acid binding protein (FABP) family. Abundant in the fluid surrounding the developing embryo of Ascaris suum.

May play a role in sequestering potentially toxic fatty acids and their peroxidation products, or it may be involved in the maintenance of the impermeable lipid layer of the eggshell. This chain is Fatty acid-binding protein homolog, found in Ascaris suum (Pig roundworm).